The following is a 450-amino-acid chain: Divalent metal cation transporter MntH (450 aa).

Helical transmembrane passes span 44–64 (LLAF…PGNW), 77–97 (TLLS…SLAA), 121–141 (FLLW…EVIG), 152–172 (IPLI…LLLM), 181–201 (AFVI…IVAA), 218–238 (IFTN…TVMP), 273–293 (IALM…AATF), 310–330 (LLSP…ALLA), 366–386 (GIAI…GTAD), 387–407 (LLVF…IPLV), and 419–439 (FAIS…IVVL).

The protein belongs to the NRAMP family.

It is found in the cell inner membrane. Functionally, h(+)-stimulated, divalent metal cation uptake system. This chain is Divalent metal cation transporter MntH, found in Bradyrhizobium diazoefficiens (strain JCM 10833 / BCRC 13528 / IAM 13628 / NBRC 14792 / USDA 110).